The primary structure comprises 408 residues: Energy-coupling factor transporter ATP-binding protein EcfA1 (408 aa).

Residues 140–374 (IEINHLSFKY…KDFLRNIQLD (235 aa)) form the ABC transporter domain. 174-181 (GHNGSGKS) contacts ATP.

It belongs to the ABC transporter superfamily. Energy-coupling factor EcfA family. As to quaternary structure, forms a stable energy-coupling factor (ECF) transporter complex composed of 2 membrane-embedded substrate-binding proteins (S component), 2 ATP-binding proteins (A component) and 2 transmembrane proteins (T component).

The protein resides in the cell membrane. ATP-binding (A) component of a common energy-coupling factor (ECF) ABC-transporter complex. Unlike classic ABC transporters this ECF transporter provides the energy necessary to transport a number of different substrates. This chain is Energy-coupling factor transporter ATP-binding protein EcfA1, found in Mycoplasma mycoides subsp. mycoides SC (strain CCUG 32753 / NCTC 10114 / PG1).